A 477-amino-acid polypeptide reads, in one-letter code: Glycogen synthase (477 aa).

Lys15 is a binding site for ADP-alpha-D-glucose.

This sequence belongs to the glycosyltransferase 1 family. Bacterial/plant glycogen synthase subfamily.

It catalyses the reaction [(1-&gt;4)-alpha-D-glucosyl](n) + ADP-alpha-D-glucose = [(1-&gt;4)-alpha-D-glucosyl](n+1) + ADP + H(+). It participates in glycan biosynthesis; glycogen biosynthesis. In terms of biological role, synthesizes alpha-1,4-glucan chains using ADP-glucose. This Escherichia fergusonii (strain ATCC 35469 / DSM 13698 / CCUG 18766 / IAM 14443 / JCM 21226 / LMG 7866 / NBRC 102419 / NCTC 12128 / CDC 0568-73) protein is Glycogen synthase.